Reading from the N-terminus, the 94-residue chain is Aspartyl/glutamyl-tRNA(Asn/Gln) amidotransferase subunit C (94 aa).

Belongs to the GatC family. Heterotrimer of A, B and C subunits.

It carries out the reaction L-glutamyl-tRNA(Gln) + L-glutamine + ATP + H2O = L-glutaminyl-tRNA(Gln) + L-glutamate + ADP + phosphate + H(+). It catalyses the reaction L-aspartyl-tRNA(Asn) + L-glutamine + ATP + H2O = L-asparaginyl-tRNA(Asn) + L-glutamate + ADP + phosphate + 2 H(+). In terms of biological role, allows the formation of correctly charged Asn-tRNA(Asn) or Gln-tRNA(Gln) through the transamidation of misacylated Asp-tRNA(Asn) or Glu-tRNA(Gln) in organisms which lack either or both of asparaginyl-tRNA or glutaminyl-tRNA synthetases. The reaction takes place in the presence of glutamine and ATP through an activated phospho-Asp-tRNA(Asn) or phospho-Glu-tRNA(Gln). This is Aspartyl/glutamyl-tRNA(Asn/Gln) amidotransferase subunit C from Desulfatibacillum aliphaticivorans.